The following is an 899-amino-acid chain: Translation initiation factor IF-2 (899 aa).

2 disordered regions span residues 31-227 and 240-310; these read KKAE…ATEQ and VTTS…GFDK. Polar residues-rich tracts occupy residues 36 to 47 and 73 to 87; these read NVSQTEKQSLLS and STLS…SKSV. 3 stretches are compositionally biased toward basic and acidic residues: residues 101-173, 181-219, and 247-261; these read SALE…EKAK, AKSE…ETNE, and RAAE…ETTG. Residues 296–308 show a composition bias toward polar residues; the sequence is PQVNAPTSMQQGF. The 168-residue stretch at 398 to 565 folds into the tr-type G domain; sequence SRAPVVTIMG…AILLQSEILE (168 aa). The tract at residues 407–414 is G1; it reads GHVDHGKT. 407–414 lines the GTP pocket; that stretch reads GHVDHGKT. Positions 432-436 are G2; the sequence is GITQH. The interval 453–456 is G3; that stretch reads DTPG. GTP contacts are provided by residues 453-457 and 507-510; these read DTPGH and NKID. The segment at 507–510 is G4; sequence NKID. The tract at residues 543–545 is G5; sequence SAK.

Belongs to the TRAFAC class translation factor GTPase superfamily. Classic translation factor GTPase family. IF-2 subfamily.

It localises to the cytoplasm. Functionally, one of the essential components for the initiation of protein synthesis. Protects formylmethionyl-tRNA from spontaneous hydrolysis and promotes its binding to the 30S ribosomal subunits. Also involved in the hydrolysis of GTP during the formation of the 70S ribosomal complex. This Photobacterium profundum (strain SS9) protein is Translation initiation factor IF-2.